Here is a 393-residue protein sequence, read N- to C-terminus: Phosphopentomutase (393 aa).

Residues D15, D288, H293, D329, H330, and H341 each contribute to the Mn(2+) site.

It belongs to the phosphopentomutase family. Mn(2+) is required as a cofactor.

The protein localises to the cytoplasm. The enzyme catalyses 2-deoxy-alpha-D-ribose 1-phosphate = 2-deoxy-D-ribose 5-phosphate. The catalysed reaction is alpha-D-ribose 1-phosphate = D-ribose 5-phosphate. The protein operates within carbohydrate degradation; 2-deoxy-D-ribose 1-phosphate degradation; D-glyceraldehyde 3-phosphate and acetaldehyde from 2-deoxy-alpha-D-ribose 1-phosphate: step 1/2. Isomerase that catalyzes the conversion of deoxy-ribose 1-phosphate (dRib-1-P) and ribose 1-phosphate (Rib-1-P) to deoxy-ribose 5-phosphate (dRib-5-P) and ribose 5-phosphate (Rib-5-P), respectively. This is Phosphopentomutase from Halalkalibacterium halodurans (strain ATCC BAA-125 / DSM 18197 / FERM 7344 / JCM 9153 / C-125) (Bacillus halodurans).